A 168-amino-acid chain; its full sequence is Leukotoxin-activating lysine-acyltransferase LtxC (168 aa).

Residues His23 and Asp92 contribute to the active site.

This sequence belongs to the RTX toxin acyltransferase family.

It is found in the cytoplasm. The catalysed reaction is a fatty acyl-[ACP] + L-lysyl-[protein] = N(6)-(fatty acyl)-L-lysyl-[protein] + holo-[ACP] + H(+). Required for full activity and modification of the LtxA leukotoxin. Involved in fatty acid modification of the protoxin at two internal lysine residues, thereby converting it to the active toxin. This chain is Leukotoxin-activating lysine-acyltransferase LtxC, found in Aggregatibacter actinomycetemcomitans (Actinobacillus actinomycetemcomitans).